A 403-amino-acid polypeptide reads, in one-letter code: RNA-binding motif, single-stranded-interacting protein 1 (403 aa).

Residues 30 to 56 (PAHPMAPPSPSTTSSNNNSSSSSNSGW) form a disordered region. Residues 40-54 (STTSSNNNSSSSSNS) are compositionally biased toward low complexity. 2 consecutive RRM domains span residues 62–135 (TNLY…MAKQ) and 141–226 (TNLY…FADG). A Phosphothreonine modification is found at T208.

Its subcellular location is the nucleus. Its function is as follows. Single-stranded DNA binding protein that interacts with the region upstream of the MYC gene. Binds specifically to the DNA sequence motif 5'-[AT]CT[AT][AT]T-3'. Probably has a role in DNA replication. This Rattus norvegicus (Rat) protein is RNA-binding motif, single-stranded-interacting protein 1.